The following is a 512-amino-acid chain: Mannose-1-phosphate guanylyltransferase (512 aa).

This sequence belongs to the mannose-6-phosphate isomerase type 2 family.

The enzyme catalyses alpha-D-mannose 1-phosphate + GTP + H(+) = GDP-alpha-D-mannose + diphosphate. The sequence is that of Mannose-1-phosphate guanylyltransferase (noeJ) from Sinorhizobium fredii (strain NBRC 101917 / NGR234).